A 236-amino-acid chain; its full sequence is uncharacterized protein (236 aa).

It belongs to the RHS family.

This is an uncharacterized protein from Escherichia coli (strain K12).